The chain runs to 183 residues: UPF0200 protein MMP1282 (183 aa).

Gly8–Ser15 is an ATP binding site.

Belongs to the UPF0200 family.

The protein is UPF0200 protein MMP1282 of Methanococcus maripaludis (strain DSM 14266 / JCM 13030 / NBRC 101832 / S2 / LL).